The chain runs to 490 residues: uncharacterized protein (490 aa).

A helical transmembrane segment spans residues 27–47 (VYVFLTTIILLLSLISTLIII).

It is found in the membrane. This is an uncharacterized protein from Borreliella burgdorferi (strain ATCC 35210 / DSM 4680 / CIP 102532 / B31) (Borrelia burgdorferi).